The sequence spans 288 residues: Putative hydrolase LipZ (288 aa).

It belongs to the AB hydrolase superfamily.

The protein is Putative hydrolase LipZ of Mycobacterium tuberculosis (strain CDC 1551 / Oshkosh).